A 199-amino-acid polypeptide reads, in one-letter code: Calcium-binding protein CAST (199 aa).

Positions 1–13 are enriched in basic and acidic residues; that stretch reads MGSVQDENKDEFK. The disordered stretch occupies residues 1-31; that stretch reads MGSVQDENKDEFKQSLTRGKLKPSSSSSFRL. EF-hand domains are found at residues 36–71, 75–110, 125–160, and 163–198; these read LNSI…LGLD, SEIE…VFFG, QDES…LGLP, and SEID…VIVP. Positions 49, 51, 53, and 60 each coordinate Ca(2+). Ca(2+)-binding residues include D138, N140, D142, E149, D178, D180, R182, and E187.

Its function is as follows. Not known. Probably binds 3 calcium ions. This chain is Calcium-binding protein CAST, found in Solanum tuberosum (Potato).